The primary structure comprises 1941 residues: Myosin-2 (1941 aa).

Residues 33–82 (DAKTSVFVAEPKESFVKGTIQSREGGKVTVKTEGGATLTVKDDQVFPMNP) form the Myosin N-terminal SH3-like domain. A phosphothreonine mark is found at Thr64 and Thr69. A Myosin motor domain is found at 86-784 (DKIEDMAMMT…LLGLLEEMRD (699 aa)). Position 130 is an N6,N6,N6-trimethyllysine (Lys130). 179 to 186 (GESGAGKT) contacts ATP. Tyr389 carries the phosphotyrosine modification. The residue at position 392 (Ser392) is a Phosphoserine. Thr419 carries the post-translational modification Phosphothreonine. Ser625 carries the phosphoserine modification. Residues 661–683 (LNKLMTNLRSTHPHFVRCIIPNE) form an actin-binding region. The residue at position 759 (His759) is a Pros-methylhistidine. The segment at 763-777 (KFGHTKVFFKAGLLG) is actin-binding. An IQ domain is found at 787 to 816 (LAQLITRTQARCRGFLARVEYQRMVERREA). Positions 845–1941 (LLKSAETEKE…EVHTKVISEE (1097 aa)) form a coiled coil. Phosphoserine is present on residues Ser1094 and Ser1098. Disordered stretches follow at residues 1128–1149 (IEAE…SREL) and 1155–1174 (RLEE…KKRE). Residues 1130–1149 (AERASRAKAEKQRSDLSREL) are compositionally biased toward basic and acidic residues. Phosphoserine occurs at positions 1164 and 1239. A Phosphothreonine modification is found at Thr1243. Ser1245 carries the post-translational modification Phosphoserine. Residue Thr1257 is modified to Phosphothreonine. The residue at position 1263 (Ser1263) is a Phosphoserine. Position 1288 is a phosphothreonine (Thr1288). 4 positions are modified to phosphoserine: Ser1290, Ser1294, Ser1305, and Ser1308. Thr1469 bears the Phosphothreonine mark. Ser1476 carries the post-translational modification Phosphoserine. Tyr1494 bears the Phosphotyrosine mark. The residue at position 1497 (Ser1497) is a Phosphoserine. Position 1503 is a phosphothreonine (Thr1503). Ser1516 is subject to Phosphoserine. Thr1519 bears the Phosphothreonine mark. A phosphoserine mark is found at Ser1556, Ser1576, Ser1602, Ser1605, Ser1716, and Ser1728. Residues Thr1732 and Thr1738 each carry the phosphothreonine modification. Ser1741 carries the post-translational modification Phosphoserine.

The protein belongs to the TRAFAC class myosin-kinesin ATPase superfamily. Myosin family. Muscle myosin is a hexameric protein that consists of 2 heavy chain subunits (MHC), 2 alkali light chain subunits (MLC) and 2 regulatory light chain subunits (MLC-2). Interacts with GCSAM.

It localises to the cytoplasm. The protein resides in the myofibril. Its function is as follows. Myosins are actin-based motor molecules with ATPase activity essential for muscle contraction. This Homo sapiens (Human) protein is Myosin-2.